The chain runs to 293 residues: ATP synthase gamma chain (293 aa).

This sequence belongs to the ATPase gamma chain family. As to quaternary structure, F-type ATPases have 2 components, CF(1) - the catalytic core - and CF(0) - the membrane proton channel. CF(1) has five subunits: alpha(3), beta(3), gamma(1), delta(1), epsilon(1). CF(0) has three main subunits: a, b and c.

It is found in the cell inner membrane. Produces ATP from ADP in the presence of a proton gradient across the membrane. The gamma chain is believed to be important in regulating ATPase activity and the flow of protons through the CF(0) complex. This Gluconacetobacter diazotrophicus (strain ATCC 49037 / DSM 5601 / CCUG 37298 / CIP 103539 / LMG 7603 / PAl5) protein is ATP synthase gamma chain.